The primary structure comprises 729 residues: RNA1 polyprotein (729 aa).

In terms of domain architecture, Peptidase C3 spans 1-21 (GIHVAGGRGKGYACLMPPLRP). Residues 299 to 429 (NSILCCDYSS…SVSPVIHDKF (131 aa)) enclose the RdRp catalytic domain.

In terms of processing, specific enzymatic cleavages by picornain 3C-like protease in vivo yield mature proteins. Picornain 3C-like protease is autocatalytically processed.

It is found in the host endoplasmic reticulum. It catalyses the reaction RNA(n) + a ribonucleoside 5'-triphosphate = RNA(n+1) + diphosphate. Functionally, thiol protease that cleaves the RNA1 and RNA2 polyproteins. Its function is as follows. Replicates the viral genome. In Solanum tuberosum (Potato), this protein is RNA1 polyprotein.